Reading from the N-terminus, the 375-residue chain is Probable neutral protease 2 homolog ARB_05817 (375 aa).

The first 19 residues, 1–19, serve as a signal peptide directing secretion; sequence MQVIVALAALGSLAAPALG. A propeptide spanning residues 20–189 is cleaved from the precursor; sequence FSIPRGVPVS…RGPLTRINKR (170 aa). Disulfide bonds link Cys197–Cys267 and Cys274–Cys292. His317 provides a ligand contact to Zn(2+). Glu318 is an active-site residue. Zn(2+)-binding residues include His321 and Asp332.

It belongs to the peptidase M35 family. Zn(2+) is required as a cofactor.

It is found in the secreted. The enzyme catalyses Preferential cleavage of bonds with hydrophobic residues in P1'. Also 3-Asn-|-Gln-4 and 8-Gly-|-Ser-9 bonds in insulin B chain.. Probable secreted metalloprotease that shows high activities on basic nuclear substrates such as histone and protamine. May be involved in virulence. The sequence is that of Probable neutral protease 2 homolog ARB_05817 from Arthroderma benhamiae (strain ATCC MYA-4681 / CBS 112371) (Trichophyton mentagrophytes).